The sequence spans 862 residues: Ubiquitin carboxyl-terminal hydrolase 13 (862 aa).

The UBP-type; degenerate zinc finger occupies 182–290; that stretch reads QASKHAKSLV…KHLAHFGIDM (109 aa). Zn(2+)-binding residues include Cys206, Cys209, Cys226, and His239. The USP domain occupies 331-860; that stretch reads TGMKNLGNSC…LGYIYFYHRI (530 aa). The Nucleophile role is filled by Cys340. 2 UBA domains span residues 647–688 and 722–762; these read DIDE…IIAH and QPPE…IFSH. The Proton acceptor role is filled by His822.

It belongs to the peptidase C19 family.

It catalyses the reaction Thiol-dependent hydrolysis of ester, thioester, amide, peptide and isopeptide bonds formed by the C-terminal Gly of ubiquitin (a 76-residue protein attached to proteins as an intracellular targeting signal).. With respect to regulation, specifically inhibited by spautin-1 (specific and potent autophagy inhibitor-1), a derivative of MBCQ that binds to USP13 and inhibits deubiquitinase activity. In terms of biological role, deubiquitinase that mediates deubiquitination of target proteins and is involved in various processes such as autophagy and endoplasmic reticulum-associated degradation (ERAD). This chain is Ubiquitin carboxyl-terminal hydrolase 13 (USP13), found in Gallus gallus (Chicken).